Reading from the N-terminus, the 277-residue chain is Large ribosomal subunit protein uL2 (277 aa).

Positions 219–277 (TVRGSVMNPNDHPHGGGEGRAPIGRKSPMSPWGKPTLGFKTRKKKNKSDKFIVRRRKNK) are disordered. A compositionally biased stretch (basic residues) spans 258–277 (KTRKKKNKSDKFIVRRRKNK).

This sequence belongs to the universal ribosomal protein uL2 family. As to quaternary structure, part of the 50S ribosomal subunit. Forms a bridge to the 30S subunit in the 70S ribosome.

Its function is as follows. One of the primary rRNA binding proteins. Required for association of the 30S and 50S subunits to form the 70S ribosome, for tRNA binding and peptide bond formation. It has been suggested to have peptidyltransferase activity; this is somewhat controversial. Makes several contacts with the 16S rRNA in the 70S ribosome. This chain is Large ribosomal subunit protein uL2, found in Bacillus subtilis (strain 168).